A 201-amino-acid polypeptide reads, in one-letter code: Cytochrome c oxidase assembly protein CtaG (201 aa).

The Cytoplasmic portion of the chain corresponds to 1-13; it reads MTDQGENEKKQRR. A helical; Signal-anchor for type II membrane protein transmembrane segment spans residues 14-36; it reads SNATIAVACLSFFVCMIGAAYAS. The Periplasmic segment spans residues 37–201; sequence VPLYRIFCQV…KAVGSTRNGG (165 aa).

It belongs to the COX11/CtaG family.

It localises to the cell inner membrane. Functionally, exerts its effect at some terminal stage of cytochrome c oxidase synthesis, probably by being involved in the insertion of the copper B into subunit I. This Brucella suis (strain ATCC 23445 / NCTC 10510) protein is Cytochrome c oxidase assembly protein CtaG.